We begin with the raw amino-acid sequence, 345 residues long: S-adenosylmethionine:tRNA ribosyltransferase-isomerase (345 aa).

The protein belongs to the QueA family. In terms of assembly, monomer.

The protein localises to the cytoplasm. The enzyme catalyses 7-aminomethyl-7-carbaguanosine(34) in tRNA + S-adenosyl-L-methionine = epoxyqueuosine(34) in tRNA + adenine + L-methionine + 2 H(+). The protein operates within tRNA modification; tRNA-queuosine biosynthesis. In terms of biological role, transfers and isomerizes the ribose moiety from AdoMet to the 7-aminomethyl group of 7-deazaguanine (preQ1-tRNA) to give epoxyqueuosine (oQ-tRNA). In Helicobacter pylori (strain G27), this protein is S-adenosylmethionine:tRNA ribosyltransferase-isomerase.